A 409-amino-acid chain; its full sequence is FSGDFCDSSLCLNGGTCLLDQDPQKPFHCLCPEGFTGLICNETEKGPCFPNPCHNDAECEVIDDAHRGDVFTEYICKCPHGYTGIHCEIICNAPLGMETGAIADFQISASSMHLGFMGLQRWAPELARLHRAGIVNAWTASNYDRNPWIQVNLLRRMRVTGVVTQGASRAGSAEYMKTFKVAYSTDGRKFQFIQGAEESGDKIFMGNLDNSGLKVNLFEVPLEVQYVRLVPIICHRGCTLRFELLGCELSGCAEPLGLKDNTIPNKQITASSFYRTWGLSAFSWYPFYARLDNQGKFNAWTAQSNSASEWLQIDLGSQRRVTGIITQGARDFGHIQYVAAYKVAYSDDGVSWTEYRDQGALEGKIFPGNLDNNSHKKNMFETPFLTRFVRILPVAWHNRITLRVELLGC.

2 EGF-like domains span residues 2-41 (SGDFCDSSLCLNGGTCLLDQDPQKPFHCLCPEGFTGLICN) and 44-88 (EKGP…IHCE). Intrachain disulfides connect C6-C17, C11-C29, and C31-C40. N-linked (GlcNAc...) asparagine glycosylation is present at N41. Cystine bridges form between C48–C59, C53–C76, C78–C87, C91–C247, C234–C238, and C252–C409. The Cell attachment site motif lies at 67–69 (RGD). F5/8 type C domains are found at residues 91–247 (CNAP…LLGC) and 252–409 (CAEP…LLGC). Residue N372 is glycosylated (N-linked (GlcNAc...) asparagine).

As to expression, mammary epithelial cell surfaces and spermatozoan. Also present in testis, epididymis, uterus, adrenal gland, tonsil, muscle, heart, lymphatic gland, thymus and kidney but not spleen, liver, lung or brain.

The protein localises to the membrane. The protein resides in the secreted. Its subcellular location is the cytoplasmic vesicle. It localises to the secretory vesicle. It is found in the acrosome membrane. Its function is as follows. Contributes to phagocytic removal of apoptotic cells in many tissues. Plays an important role in the maintenance of intestinal epithelial homeostasis and the promotion of mucosal healing. Promotes VEGF-dependent neovascularization. Specific ligand for the alpha-v/beta-3 and alpha-v/beta-5 receptors. Also binds to phosphatidylserine-enriched cell surfaces in a receptor-independent manner. Zona pellucida-binding protein which may play a role in gamete interaction. This chain is Lactadherin (MFGE8), found in Sus scrofa (Pig).